A 246-amino-acid polypeptide reads, in one-letter code: 3-deoxy-manno-octulosonate cytidylyltransferase (246 aa).

It belongs to the KdsB family.

Its subcellular location is the cytoplasm. It catalyses the reaction 3-deoxy-alpha-D-manno-oct-2-ulosonate + CTP = CMP-3-deoxy-beta-D-manno-octulosonate + diphosphate. It participates in nucleotide-sugar biosynthesis; CMP-3-deoxy-D-manno-octulosonate biosynthesis; CMP-3-deoxy-D-manno-octulosonate from 3-deoxy-D-manno-octulosonate and CTP: step 1/1. Its pathway is bacterial outer membrane biogenesis; lipopolysaccharide biosynthesis. In terms of biological role, activates KDO (a required 8-carbon sugar) for incorporation into bacterial lipopolysaccharide in Gram-negative bacteria. The chain is 3-deoxy-manno-octulosonate cytidylyltransferase from Rickettsia conorii (strain ATCC VR-613 / Malish 7).